The chain runs to 1715 residues: Protein PHYLLO, chloroplastic (1715 aa).

Residues 1 to 19 constitute a chloroplast transit peptide; it reads MRSSFLVSNPPFLPSLIPR. Positions 20-273 are inactive isochorismate synthase; the sequence is YSSRKSIRRS…EKSIFQVSSH (254 aa). A 2-succinyl-5-enolpyruvyl-6-hydroxy-3-cyclohexene-1-carboxylate synthase region spans residues 363–933; that stretch reads NAVWASAIIE…GTKSELEDAL (571 aa). Residues 429–449 form a helical membrane-spanning segment; that stretch reads AVIITSSGTAVSNLLPAVVEA. Positions 981 to 1364 are O-succinylbenzoate synthase; sequence FLHPMIKNVL…SEDVMMNTLG (384 aa). K1170 acts as the Proton donor; for the o-succinylbenzoate synthase activity in catalysis. Mg(2+) is bound by residues D1202, E1228, and D1251. K1279 (proton acceptor; for the o-succinylbenzoate synthase activity) is an active-site residue. The interval 1418–1715 is 2-succinyl-6-hydroxy-2,4-cyclohexadiene-1-carboxylate synthase; that stretch reads HFIRVHDVGE…QKLLLALKEM (298 aa). The region spanning 1435–1540 is the AB hydrolase-1 domain; sequence LFLHGFLGTG…EGAVVVSGSP (106 aa).

In the N-terminal section; belongs to the isochorismate synthase family. This sequence in the 2nd section; belongs to the TPP enzyme family. MenD subfamily. It in the 3rd section; belongs to the mandelate racemase/muconate lactonizing enzyme family. MenC type 1 subfamily. The protein in the C-terminal section; belongs to the AB hydrolase superfamily. MenH family. Mg(2+) serves as cofactor. Requires Mn(2+) as cofactor. It depends on thiamine diphosphate as a cofactor.

It localises to the plastid. It is found in the chloroplast membrane. The enzyme catalyses isochorismate + 2-oxoglutarate + H(+) = 5-enolpyruvoyl-6-hydroxy-2-succinyl-cyclohex-3-ene-1-carboxylate + CO2. It carries out the reaction (1R,6R)-6-hydroxy-2-succinyl-cyclohexa-2,4-diene-1-carboxylate = 2-succinylbenzoate + H2O. It catalyses the reaction 5-enolpyruvoyl-6-hydroxy-2-succinyl-cyclohex-3-ene-1-carboxylate = (1R,6R)-6-hydroxy-2-succinyl-cyclohexa-2,4-diene-1-carboxylate + pyruvate. Functionally, multifunctional enzyme required for phylloquinone (vitamin K1) biosynthesis. The sequence is that of Protein PHYLLO, chloroplastic (PHYLLO) from Arabidopsis thaliana (Mouse-ear cress).